The chain runs to 264 residues: Somatomedin-B and thrombospondin type-1 domain-containing protein (264 aa).

The signal sequence occupies residues 1 to 20 (MKTLWMVLCALARLWPGALA). The SMB domain occupies 24–75 (EAGRCCPGRDPACFARGWRLDRVYGTCFCDQACRLTGDCCFDYDRACPARPC). Disulfide bonds link cysteine 28-cysteine 36, cysteine 28-cysteine 52, cysteine 36-cysteine 70, cysteine 50-cysteine 52, cysteine 50-cysteine 63, cysteine 56-cysteine 62, and cysteine 63-cysteine 70. In terms of domain architecture, TSP type-1 spans 74 to 125 (PCFVGEWSPWSGCAGQCQPTTRVRRRSVRQEPLNGGAPCPPLEERAGCLEYS). The N-linked (GlcNAc...) asparagine glycan is linked to asparagine 227.

This sequence belongs to the thrombospondin family.

The protein resides in the secreted. It is found in the extracellular space. It localises to the extracellular matrix. This is Somatomedin-B and thrombospondin type-1 domain-containing protein (Sbspon) from Mus musculus (Mouse).